The primary structure comprises 684 residues: DNA ligase (684 aa).

NAD(+) contacts are provided by residues Asp48 to Asp52, Ser97 to Leu98, and Glu129. Lys131 acts as the N6-AMP-lysine intermediate in catalysis. 4 residues coordinate NAD(+): Arg152, Glu189, Lys310, and Lys334. 4 residues coordinate Zn(2+): Cys429, Cys432, Cys447, and Cys452. The region spanning Ala609–Ile684 is the BRCT domain.

The protein belongs to the NAD-dependent DNA ligase family. LigA subfamily. The cofactor is Mg(2+). Requires Mn(2+) as cofactor.

It carries out the reaction NAD(+) + (deoxyribonucleotide)n-3'-hydroxyl + 5'-phospho-(deoxyribonucleotide)m = (deoxyribonucleotide)n+m + AMP + beta-nicotinamide D-nucleotide.. DNA ligase that catalyzes the formation of phosphodiester linkages between 5'-phosphoryl and 3'-hydroxyl groups in double-stranded DNA using NAD as a coenzyme and as the energy source for the reaction. It is essential for DNA replication and repair of damaged DNA. This Bdellovibrio bacteriovorus (strain ATCC 15356 / DSM 50701 / NCIMB 9529 / HD100) protein is DNA ligase.